The chain runs to 349 residues: RING-H2 finger protein ATL48 (349 aa).

Residues 1–85 form the HIG1 domain; the sequence is MSSVEPDMED…DNPWKKLLLS (85 aa). The residue at position 2 (Ser-2) is an N-acetylserine. The next 3 helical transmembrane spans lie at 21–41, 55–75, and 121–141; these read PLVPLGALMTAGVLTAGLISF, ARVVVQGATVALMVGTGYYYG, and CLVISGLALIIVFLGVLYLIF. The segment at 207–249 adopts an RING-type; atypical zinc-finger fold; the sequence is CAVCLNEFSDTDKLRLLPVCSHAFHLHCIDTWLLSNSTCPLCR.

The protein belongs to the RING-type zinc finger family. ATL subfamily.

It is found in the membrane. It carries out the reaction S-ubiquitinyl-[E2 ubiquitin-conjugating enzyme]-L-cysteine + [acceptor protein]-L-lysine = [E2 ubiquitin-conjugating enzyme]-L-cysteine + N(6)-ubiquitinyl-[acceptor protein]-L-lysine.. Its pathway is protein modification; protein ubiquitination. This chain is RING-H2 finger protein ATL48 (ATL48), found in Arabidopsis thaliana (Mouse-ear cress).